Consider the following 308-residue polypeptide: Homoserine O-acetyltransferase (308 aa).

Cysteine 142 functions as the Acyl-thioester intermediate in the catalytic mechanism. Substrate is bound by residues lysine 163 and serine 192. Histidine 235 serves as the catalytic Proton acceptor. Residue glutamate 237 is part of the active site. Residue arginine 249 participates in substrate binding.

Belongs to the MetA family.

The protein resides in the cytoplasm. It catalyses the reaction L-homoserine + acetyl-CoA = O-acetyl-L-homoserine + CoA. It participates in amino-acid biosynthesis; L-methionine biosynthesis via de novo pathway; O-acetyl-L-homoserine from L-homoserine: step 1/1. Transfers an acetyl group from acetyl-CoA to L-homoserine, forming acetyl-L-homoserine. The chain is Homoserine O-acetyltransferase from Agrobacterium fabrum (strain C58 / ATCC 33970) (Agrobacterium tumefaciens (strain C58)).